A 266-amino-acid chain; its full sequence is Phosphatidylglycerol--prolipoprotein diacylglyceryl transferase (266 aa).

The next 4 helical transmembrane spans lie at 14–34, 55–75, 91–111, and 117–137; these read FGPL…AFFW, FLFY…ILFY, WKGG…MWLF, and VSMF…LFFG. Position 138 (R138) interacts with a 1,2-diacyl-sn-glycero-3-phospho-(1'-sn-glycerol). 3 consecutive transmembrane segments (helical) span residues 172-192, 201-221, and 235-255; these read YPTQ…ILMF, GAAS…VEFF, and WVTM…ALVV.

It belongs to the Lgt family.

It is found in the cell inner membrane. The enzyme catalyses L-cysteinyl-[prolipoprotein] + a 1,2-diacyl-sn-glycero-3-phospho-(1'-sn-glycerol) = an S-1,2-diacyl-sn-glyceryl-L-cysteinyl-[prolipoprotein] + sn-glycerol 1-phosphate + H(+). Its pathway is protein modification; lipoprotein biosynthesis (diacylglyceryl transfer). Catalyzes the transfer of the diacylglyceryl group from phosphatidylglycerol to the sulfhydryl group of the N-terminal cysteine of a prolipoprotein, the first step in the formation of mature lipoproteins. This chain is Phosphatidylglycerol--prolipoprotein diacylglyceryl transferase, found in Hydrogenovibrio crunogenus (strain DSM 25203 / XCL-2) (Thiomicrospira crunogena).